The sequence spans 142 residues: Large ribosomal subunit protein uL11 (142 aa).

The protein belongs to the universal ribosomal protein uL11 family. Part of the ribosomal stalk of the 50S ribosomal subunit. Interacts with L10 and the large rRNA to form the base of the stalk. L10 forms an elongated spine to which L12 dimers bind in a sequential fashion forming a multimeric L10(L12)X complex. One or more lysine residues are methylated.

Functionally, forms part of the ribosomal stalk which helps the ribosome interact with GTP-bound translation factors. The polypeptide is Large ribosomal subunit protein uL11 (Pasteurella multocida (strain Pm70)).